A 92-amino-acid polypeptide reads, in one-letter code: Large ribosomal subunit protein eL43 (92 aa).

Residues Cys39, Cys42, Cys57, and Cys60 each contribute to the Zn(2+) site. The segment at 39–60 (CSFCGKTKMKRKAVGIWHCGSC) adopts a C4-type zinc-finger fold.

The protein belongs to the eukaryotic ribosomal protein eL43 family. In terms of assembly, component of the large ribosomal subunit.

Its subcellular location is the cytoplasm. In terms of biological role, component of the large ribosomal subunit. The ribosome is a large ribonucleoprotein complex responsible for the synthesis of proteins in the cell. The polypeptide is Large ribosomal subunit protein eL43 (RPL37A) (Gallus gallus (Chicken)).